The sequence spans 154 residues: 3-dehydroquinate dehydratase (154 aa).

Residue Tyr23 is the Proton acceptor of the active site. Substrate-binding residues include Asn75, His81, and Asp88. The active-site Proton donor is the His101. Substrate-binding positions include Leu102–Ser103 and Arg112.

The protein belongs to the type-II 3-dehydroquinase family. Homododecamer.

The catalysed reaction is 3-dehydroquinate = 3-dehydroshikimate + H2O. It functions in the pathway metabolic intermediate biosynthesis; chorismate biosynthesis; chorismate from D-erythrose 4-phosphate and phosphoenolpyruvate: step 3/7. Its function is as follows. Catalyzes a trans-dehydration via an enolate intermediate. This Teredinibacter turnerae (strain ATCC 39867 / T7901) protein is 3-dehydroquinate dehydratase.